Consider the following 417-residue polypeptide: Gamma-glutamyl phosphate reductase (417 aa).

The protein belongs to the gamma-glutamyl phosphate reductase family.

The protein localises to the cytoplasm. It catalyses the reaction L-glutamate 5-semialdehyde + phosphate + NADP(+) = L-glutamyl 5-phosphate + NADPH + H(+). It functions in the pathway amino-acid biosynthesis; L-proline biosynthesis; L-glutamate 5-semialdehyde from L-glutamate: step 2/2. Catalyzes the NADPH-dependent reduction of L-glutamate 5-phosphate into L-glutamate 5-semialdehyde and phosphate. The product spontaneously undergoes cyclization to form 1-pyrroline-5-carboxylate. The protein is Gamma-glutamyl phosphate reductase of Escherichia coli O17:K52:H18 (strain UMN026 / ExPEC).